The primary structure comprises 201 residues: MDIKACYQNAKALLEGHFLLSSGFHSNYYLQSAKVLEDPKLAEQLALELAKQIQEAHLNIECVCSPAIGGILAGYELARALGVRFIFTERVDNTMTLRRGFEVKKNEKILVCEDIITTGKSAMECAKVLEEKGAQIVAFGALANRGICKRTHSHLKAQEGACLPSHLPLFALEDFVFDMHKPSSCPLCATSVAIKPGSRGN.

E113–S121 provides a ligand contact to 5-phospho-alpha-D-ribose 1-diphosphate. Residues T117 and R145 each coordinate orotate.

It belongs to the purine/pyrimidine phosphoribosyltransferase family. PyrE subfamily. As to quaternary structure, homodimer. Mg(2+) serves as cofactor.

It catalyses the reaction orotidine 5'-phosphate + diphosphate = orotate + 5-phospho-alpha-D-ribose 1-diphosphate. It functions in the pathway pyrimidine metabolism; UMP biosynthesis via de novo pathway; UMP from orotate: step 1/2. Functionally, catalyzes the transfer of a ribosyl phosphate group from 5-phosphoribose 1-diphosphate to orotate, leading to the formation of orotidine monophosphate (OMP). The protein is Orotate phosphoribosyltransferase of Helicobacter pylori (strain G27).